A 162-amino-acid polypeptide reads, in one-letter code: MVMREETIKSLEDPYKYHYKEEWLNTKDPDEQQLFEIFAFGNIKDLPENIILTSLMRSKLEKLTLVTLSEIYNELSYELIKEECQIEDDGIIESHLIQLQNIFKAEMDSVSKSMKFSRRFDCRDVYCHEKELTIIKNPRVTKEYLVQNLRSWETKLKQNILE.

One can recognise a PCI domain in the interval 6 to 118; that stretch reads ETIKSLEDPY…SVSKSMKFSR (113 aa).

As to quaternary structure, component of a COP9 signalosome-like (CSN) complex, composed of at least RRI1/CSN5, CSN9, RRI2/CSN10, PCI8/CSN11, CSN12 and CSI1. In the complex, it probably interacts directly with CSN12 and CSI1. Also interacts with RPN5.

It localises to the cytoplasm. Its subcellular location is the nucleus. Functionally, component of the COP9 signalosome (CSN) complex that acts as a regulator of the ubiquitin (Ubl) conjugation pathway by mediating the deneddylation of the cullin subunit of SCF-type E3 ubiquitin-protein ligase complexes. The CSN complex is involved in the regulation of the mating pheromone response. This Saccharomyces cerevisiae (strain ATCC 204508 / S288c) (Baker's yeast) protein is COP9 signalosome complex subunit 9 (CSN9).